A 496-amino-acid chain; its full sequence is Fusarielin biosynthesis cluster transcription factor FSL7 (496 aa).

A DNA-binding region (zn(2)-C6 fungal-type) is located at residues Cys16–Cys46. Disordered stretches follow at residues Pro57–Ser102, Arg189–Met224, Ala281–Ser307, Gly348–Thr379, and Met444–Ala470. Composition is skewed to polar residues over residues Gly65 to Met89 and Glu207 to Pro218. Low complexity predominate over residues Ala281–Thr294. Over residues Tyr355 to Thr379 the composition is skewed to polar residues. Positions Met444–Thr460 are enriched in basic and acidic residues.

Its subcellular location is the nucleus. In terms of biological role, transcription regulator that specifically up-regulates the gene cluster that mediates the biosynthesis of fusarielins F, G and H, decaketide compounds with 5 methylations and a decaline core that act as mycoestrogens as they stimulate growth of MCF-7 breast cancer cells. Probably binds the 5'-CGGNNNCCG-3' motif present in the promoter of all the cluster genes. The polypeptide is Fusarielin biosynthesis cluster transcription factor FSL7 (Gibberella zeae (strain ATCC MYA-4620 / CBS 123657 / FGSC 9075 / NRRL 31084 / PH-1) (Wheat head blight fungus)).